Here is a 194-residue protein sequence, read N- to C-terminus: Peptidyl-tRNA hydrolase (194 aa).

Tyr-16 contributes to the tRNA binding site. Catalysis depends on His-21, which acts as the Proton acceptor. Phe-67, Asn-69, and Asn-115 together coordinate tRNA.

This sequence belongs to the PTH family. As to quaternary structure, monomer.

It is found in the cytoplasm. The enzyme catalyses an N-acyl-L-alpha-aminoacyl-tRNA + H2O = an N-acyl-L-amino acid + a tRNA + H(+). Hydrolyzes ribosome-free peptidyl-tRNAs (with 1 or more amino acids incorporated), which drop off the ribosome during protein synthesis, or as a result of ribosome stalling. Functionally, catalyzes the release of premature peptidyl moieties from peptidyl-tRNA molecules trapped in stalled 50S ribosomal subunits, and thus maintains levels of free tRNAs and 50S ribosomes. The chain is Peptidyl-tRNA hydrolase from Salmonella paratyphi B (strain ATCC BAA-1250 / SPB7).